The chain runs to 483 residues: Proline--tRNA ligase (483 aa).

Belongs to the class-II aminoacyl-tRNA synthetase family. ProS type 3 subfamily. In terms of assembly, homodimer.

Its subcellular location is the cytoplasm. It catalyses the reaction tRNA(Pro) + L-proline + ATP = L-prolyl-tRNA(Pro) + AMP + diphosphate. Catalyzes the attachment of proline to tRNA(Pro) in a two-step reaction: proline is first activated by ATP to form Pro-AMP and then transferred to the acceptor end of tRNA(Pro). This Mycoplasma genitalium (strain ATCC 33530 / DSM 19775 / NCTC 10195 / G37) (Mycoplasmoides genitalium) protein is Proline--tRNA ligase.